We begin with the raw amino-acid sequence, 728 residues long: MSTESKCPFNHTAAGGTSNHDWWPNRLNLEVLHRHSALSDPMDAEFDYAQAFKQLDLAAVKRDLHALMTMSQDWWPADFGHYGGLFVRMAWHGAGTYRIADGRGGAGGGQQRFAPLNSWPDNGNLDKARRLLWPIKQKYGRNISWADLFILTGNVALESMGFKTFGYGGGRADTWEPDDVYWGSEKIWLELSGGPNSRYSGDRDLENPLAAVQMGLIYVNPEGPDGKPDPVAAARDIRDTFARMAMNDEETVALIAGGHTFGKTHGAGPASHVGAEPEAAGIEQQGLGWKSTYGSGKAGDAITSGLEVTWTSTPTQWSNDFFKHLFSYEWELTKSPAGAHQWVAKDAEAVIPDAFDPSKKHRPTMLTTDLSLRFDPAYEKISRRFYENPDEFADAFARAWFKLTHRDMGPRSRYLGPEVPAEELLWQDPIPAVDHPLIDDADAAALKAKILATGLTVAQLVSTAWASASTFRGSDKRGGANGARIRLAPQKDWAVNQPAALAAVLETLEGVQKAFNDAQTGGKKVSLADLIVLAGAAGVEQAAKQAGVAVTVPFAAGRMDASQEQTDVDAMAVLEPVADGFRNYLKAAYKTPAEALLVDKAQLLTLTAPEMTVLIGGLRVLGANAGGAQHGVFTDRPGTLSNDFFVNLLDMGTEWKPASAANDVFEGRDRASGQLKWTGTRVDLIFGSHSQLRALAEVYGSADANEKFVRDFVAAWNKVMNLDRFDLA.

A cross-link (tryptophyl-tyrosyl-methioninium (Trp-Tyr) (with M-244)) is located at residues 91–218 (WHGAGTYRIA…LAAVQMGLIY (128 aa)). Residue His-92 is the Proton acceptor of the active site. The tryptophyl-tyrosyl-methioninium (Tyr-Met) (with W-91) cross-link spans 218 to 244 (YVNPEGPDGKPDPVAAARDIRDTFARM). His-259 contacts heme b.

Belongs to the peroxidase family. Peroxidase/catalase subfamily. Homodimer or homotetramer. Requires heme b as cofactor. In terms of processing, formation of the three residue Trp-Tyr-Met cross-link is important for the catalase, but not the peroxidase activity of the enzyme.

It carries out the reaction H2O2 + AH2 = A + 2 H2O. It catalyses the reaction 2 H2O2 = O2 + 2 H2O. Its function is as follows. Bifunctional enzyme with both catalase and broad-spectrum peroxidase activity. This is Catalase-peroxidase 1 from Burkholderia vietnamiensis (strain G4 / LMG 22486) (Burkholderia cepacia (strain R1808)).